The primary structure comprises 187 residues: dCTP deaminase (187 aa).

DCTP contacts are provided by residues 110 to 115, 134 to 136, Gln155, Tyr169, and Gln179; these read KSTYAR and TLE. Glu136 (proton donor/acceptor) is an active-site residue.

Belongs to the dCTP deaminase family. As to quaternary structure, homotrimer.

It carries out the reaction dCTP + H2O + H(+) = dUTP + NH4(+). It participates in pyrimidine metabolism; dUMP biosynthesis; dUMP from dCTP (dUTP route): step 1/2. Functionally, catalyzes the deamination of dCTP to dUTP. The sequence is that of dCTP deaminase from Bordetella petrii (strain ATCC BAA-461 / DSM 12804 / CCUG 43448).